The following is a 414-amino-acid chain: MNCFSCFYFHEKKKVPRDSDNSYRRNGEVTGRDNNKTHPENPKTVNEQNKNNDEDKEVTNNIAAQTFSFRELATATKNFRQECLIGEGGFGRVYKGKLEKTGMIVAVKQLDRNGLQGNKEFIVEVLMLSLLHHKHLVNLIGYCADGDQRLLVYEYMSRGSLEDHLLDLTPDQIPLDWDTRIRIALGAAMGLEYLHDKANPPVIYRDLKAANILLDGEFNAKLSDFGLAKLGPVGDKQHVSSRVMGTYGYCAPEYQRTGQLTTKSDVYSFGVVLLELITGRRVIDTTRPKDEQNLVTWAQPVFKEPSRFPELADPSLEGVFPEKALNQAVAVAAMCLQEEATVRPLMSDVVTALGFLGTAPDGSISVPHYDDPPQPSDETSVEDSVAAEERERAVAEAMEWGVASRAHSRNPSAS.

Cys-3 carries the S-palmitoyl cysteine lipid modification. Over residues Arg-17–Asn-41 the composition is skewed to basic and acidic residues. Positions Arg-17–Asp-55 are disordered. Residues Phe-79–Leu-356 form the Protein kinase domain. Residues Ile-85 to Val-93 and Lys-108 each bind ATP. Phosphotyrosine is present on Tyr-153. Asp-206 (proton acceptor) is an active-site residue. Phosphoserine is present on Ser-240. At Thr-246 the chain carries Phosphothreonine. Phosphotyrosine is present on Tyr-254. The segment at Ile-364–Val-394 is disordered.

This sequence belongs to the protein kinase superfamily. Ser/Thr protein kinase family. Palmitoylation at Cys-3 and Cys-6 are required for plasma membrane location.

The protein resides in the cell membrane. The catalysed reaction is L-seryl-[protein] + ATP = O-phospho-L-seryl-[protein] + ADP + H(+). It carries out the reaction L-threonyl-[protein] + ATP = O-phospho-L-threonyl-[protein] + ADP + H(+). In terms of biological role, may be involved in plant defense signaling. This is Probable serine/threonine-protein kinase PBL26 from Arabidopsis thaliana (Mouse-ear cress).